Here is a 71-residue protein sequence, read N- to C-terminus: Small ribosomal subunit protein bS21 (71 aa).

This sequence belongs to the bacterial ribosomal protein bS21 family.

The chain is Small ribosomal subunit protein bS21 from Buchnera aphidicola subsp. Baizongia pistaciae (strain Bp).